The primary structure comprises 264 residues: GTP cyclohydrolase FolE2 (264 aa).

The protein belongs to the GTP cyclohydrolase IV family.

The catalysed reaction is GTP + H2O = 7,8-dihydroneopterin 3'-triphosphate + formate + H(+). Its pathway is cofactor biosynthesis; 7,8-dihydroneopterin triphosphate biosynthesis; 7,8-dihydroneopterin triphosphate from GTP: step 1/1. Its function is as follows. Converts GTP to 7,8-dihydroneopterin triphosphate. This is GTP cyclohydrolase FolE2 from Ruthia magnifica subsp. Calyptogena magnifica.